The primary structure comprises 200 residues: Protein Syd (200 aa).

This sequence belongs to the Syd family.

Its subcellular location is the cell inner membrane. In terms of biological role, interacts with the SecY protein in vivo. May bind preferentially to an uncomplexed state of SecY, thus functioning either as a chelating agent for excess SecY in the cell or as a regulatory factor that negatively controls the translocase function. This is Protein Syd from Colwellia psychrerythraea (strain 34H / ATCC BAA-681) (Vibrio psychroerythus).